Reading from the N-terminus, the 284-residue chain is MEMO1 family protein MMP1387 (284 aa).

It belongs to the MEMO1 family.

The polypeptide is MEMO1 family protein MMP1387 (Methanococcus maripaludis (strain DSM 14266 / JCM 13030 / NBRC 101832 / S2 / LL)).